The primary structure comprises 245 residues: Transmembrane and ubiquitin-like domain-containing protein 1 (245 aa).

The interval 2–30 (ALIEGVGDEVTVLFSVLACLLVLALAWVS) is required to release iHOPS from membranes. A helical membrane pass occupies residues 11 to 31 (VTVLFSVLACLLVLALAWVST). Positions 34 to 51 (TESTDPLPQSSGTTTPAQ) are enriched in polar residues. The tract at residues 34-100 (TESTDPLPQS…ASTPPDSPQE (67 aa)) is disordered. Ser73, Ser97, and Ser126 each carry phosphoserine. A Ubiquitin-like domain is found at 102–175 (LLLRLKFLND…LHCHVSTRVG (74 aa)). The next 2 helical transmembrane spans lie at 194-214 (IGSLLLPLLLLLLLLLWYCQI) and 219-239 (FFPLTATLGLAGFTLLLSLLA).

As to quaternary structure, interacts with EEF1A1, GRIA2, GRIP1. Interacts with CAMLG, TUBG1. Interacts with NPM1 and CDKN2A; TMUB1 can enhance interaction between NPM1 and CDKN2A and is proposed to bridge the proteins; proposed to be mediated by iHOPS. Interacts with ERLIN2 and AMFR; TMUB1 promotes the interaction of ERLIN2 with AMFR. Processed by regulated intramembrane proteolysis (RIP) in the N-terminus to release iHOPS from membranes.

It is found in the membrane. The protein localises to the postsynaptic cell membrane. It localises to the recycling endosome. Its subcellular location is the cytoplasm. The protein resides in the cytoskeleton. It is found in the microtubule organizing center. The protein localises to the centrosome. It localises to the nucleus. Its subcellular location is the nucleolus. Involved in sterol-regulated ubiquitination and degradation of HMG-CoA reductase HMGCR. Involved in positive regulation of AMPA-selective glutamate receptor GRIA2 recycling to the cell surface. Acts as a negative regulator of hepatocyte growth during regeneration. In terms of biological role, may contribute to the regulation of translation during cell-cycle progression. May contribute to the regulation of cell proliferation. May be involved in centrosome assembly. Modulates stabilization and nucleolar localization of tumor suppressor CDKN2A and enhances association between CDKN2A and NPM1. The chain is Transmembrane and ubiquitin-like domain-containing protein 1 (Tmub1) from Rattus norvegicus (Rat).